Consider the following 269-residue polypeptide: Ubiquinone/menaquinone biosynthesis C-methyltransferase UbiE (269 aa).

S-adenosyl-L-methionine is bound by residues T92, D113, and 141–142; that span reads NA.

This sequence belongs to the class I-like SAM-binding methyltransferase superfamily. MenG/UbiE family.

The catalysed reaction is a 2-demethylmenaquinol + S-adenosyl-L-methionine = a menaquinol + S-adenosyl-L-homocysteine + H(+). It catalyses the reaction a 2-methoxy-6-(all-trans-polyprenyl)benzene-1,4-diol + S-adenosyl-L-methionine = a 5-methoxy-2-methyl-3-(all-trans-polyprenyl)benzene-1,4-diol + S-adenosyl-L-homocysteine + H(+). It functions in the pathway quinol/quinone metabolism; menaquinone biosynthesis; menaquinol from 1,4-dihydroxy-2-naphthoate: step 2/2. Its pathway is cofactor biosynthesis; ubiquinone biosynthesis. Its function is as follows. Methyltransferase required for the conversion of demethylmenaquinol (DMKH2) to menaquinol (MKH2) and the conversion of 2-polyprenyl-6-methoxy-1,4-benzoquinol (DDMQH2) to 2-polyprenyl-3-methyl-6-methoxy-1,4-benzoquinol (DMQH2). This Brucella suis biovar 1 (strain 1330) protein is Ubiquinone/menaquinone biosynthesis C-methyltransferase UbiE.